A 152-amino-acid chain; its full sequence is Transcriptional regulator MraZ (152 aa).

2 consecutive SpoVT-AbrB domains span residues 5–52 and 81–124; these read ASAI…PLKE and ATEC…SDAE.

It belongs to the MraZ family. In terms of assembly, forms oligomers.

It is found in the cytoplasm. The protein resides in the nucleoid. The sequence is that of Transcriptional regulator MraZ from Pasteurella multocida (strain Pm70).